A 469-amino-acid chain; its full sequence is TKASVGFKAGVKEYKLTYYTPDYEPHDHDILAAFRVTPQPGVPPEEAGAAVAAESSTGTWTTVWTDGLTSLDRYKGRCYNIEPVAGEENQFIAYVAYPLDLFEEGSVTNMFTSIVGNVFGFKALRALRLEDLRIPPAYTKTFQGPPHGIQVERDKLNKYGRPLLGCTIKPKLGLSAKNYGRAVYECLRGGLDFTKDDENVNSQPFMRWRDRFLFCAEAIFKSQSETGEIKGHYLNATAGTCEEMIKRAVFARELGVPIVMHDYLTGGFTANTSLAHYCRDNGLLLHIHRAMHAVIDRQKNHGIHFRVLAKALRMSGGDHIHAGTVVGKLEGERDITLGFVDLLRDDFVEKDRSRGIYFTQPWVSLPGVIPVASGGIHVWHMPALTEIFGDDSVLQFGGGTLGHPWGNAPGAAANRVALEACVQARNEGRDLAREGNEIIRKASKWSPELAAACEVWKEIKFEFQAMDTL.

N6,N6,N6-trimethyllysine is present on Lys8. 2 residues coordinate substrate: Asn117 and Thr167. Lys169 (proton acceptor) is an active-site residue. Lys171 is a substrate binding site. The Mg(2+) site is built by Lys195, Asp197, and Glu198. Lys195 is subject to N6-carboxylysine. Catalysis depends on His288, which acts as the Proton acceptor. Residues Arg289, His321, and Ser373 each coordinate substrate.

It belongs to the RuBisCO large chain family. Type I subfamily. In terms of assembly, heterohexadecamer of 8 large chains and 8 small chains; disulfide-linked. The disulfide link is formed within the large subunit homodimers. It depends on Mg(2+) as a cofactor. The disulfide bond which can form in the large chain dimeric partners within the hexadecamer appears to be associated with oxidative stress and protein turnover.

Its subcellular location is the plastid. The protein resides in the chloroplast. The enzyme catalyses 2 (2R)-3-phosphoglycerate + 2 H(+) = D-ribulose 1,5-bisphosphate + CO2 + H2O. It catalyses the reaction D-ribulose 1,5-bisphosphate + O2 = 2-phosphoglycolate + (2R)-3-phosphoglycerate + 2 H(+). In terms of biological role, ruBisCO catalyzes two reactions: the carboxylation of D-ribulose 1,5-bisphosphate, the primary event in carbon dioxide fixation, as well as the oxidative fragmentation of the pentose substrate in the photorespiration process. Both reactions occur simultaneously and in competition at the same active site. This Persicaria senticosa (Knotweed) protein is Ribulose bisphosphate carboxylase large chain.